The following is a 571-amino-acid chain: Urease subunit alpha (571 aa).

In terms of domain architecture, Urease spans 134–571; it reads GAIDTHIHFI…LPMAQRYFLF (438 aa). Residues histidine 139, histidine 141, and lysine 222 each contribute to the Ni(2+) site. Lysine 222 is subject to N6-carboxylysine. Substrate is bound at residue histidine 224. Ni(2+)-binding residues include histidine 251 and histidine 277. Residue histidine 325 is the Proton donor of the active site. Aspartate 365 is a Ni(2+) binding site.

It belongs to the metallo-dependent hydrolases superfamily. Urease alpha subunit family. Heterotrimer of UreA (gamma), UreB (beta) and UreC (alpha) subunits. Three heterotrimers associate to form the active enzyme. Ni cation serves as cofactor. In terms of processing, carboxylation allows a single lysine to coordinate two nickel ions.

The protein localises to the cytoplasm. The catalysed reaction is urea + 2 H2O + H(+) = hydrogencarbonate + 2 NH4(+). Its pathway is nitrogen metabolism; urea degradation; CO(2) and NH(3) from urea (urease route): step 1/1. In Bordetella pertussis (strain Tohama I / ATCC BAA-589 / NCTC 13251), this protein is Urease subunit alpha.